The sequence spans 849 residues: DNA mismatch repair protein MutS (849 aa).

665–672 (GPNMAGKS) lines the ATP pocket.

Belongs to the DNA mismatch repair MutS family.

Functionally, this protein is involved in the repair of mismatches in DNA. It is possible that it carries out the mismatch recognition step. This protein has a weak ATPase activity. This is DNA mismatch repair protein MutS from Wolbachia pipientis wMel.